A 106-amino-acid chain; its full sequence is uncharacterized protein (106 aa).

It to the N-terminal of E.carotovora exoenzyme regulation regulon ORF1. The C-terminal part is colinear with YqcB. This sequence to E.coli YqcC.

This is an uncharacterized protein from Haemophilus influenzae (strain ATCC 51907 / DSM 11121 / KW20 / Rd).